Consider the following 259-residue polypeptide: Glucosamine-6-phosphate deaminase (259 aa).

Aspartate 66 functions as the Proton acceptor; for enolization step in the catalytic mechanism. Aspartate 135 serves as the catalytic For ring-opening step. Residue histidine 137 is the Proton acceptor; for ring-opening step of the active site. The active-site For ring-opening step is glutamate 142.

Belongs to the glucosamine/galactosamine-6-phosphate isomerase family. NagB subfamily.

It catalyses the reaction alpha-D-glucosamine 6-phosphate + H2O = beta-D-fructose 6-phosphate + NH4(+). Its pathway is amino-sugar metabolism; N-acetylneuraminate degradation; D-fructose 6-phosphate from N-acetylneuraminate: step 5/5. In terms of biological role, catalyzes the reversible isomerization-deamination of glucosamine 6-phosphate (GlcN6P) to form fructose 6-phosphate (Fru6P) and ammonium ion. This is Glucosamine-6-phosphate deaminase from Pseudarthrobacter chlorophenolicus (strain ATCC 700700 / DSM 12829 / CIP 107037 / JCM 12360 / KCTC 9906 / NCIMB 13794 / A6) (Arthrobacter chlorophenolicus).